The following is a 197-amino-acid chain: Dephospho-CoA kinase (197 aa).

The 195-residue stretch at 3–197 folds into the DPCK domain; it reads IIGLTGGIAS…IEEIWAKRFP (195 aa). 11–16 provides a ligand contact to ATP; sequence ASGKST.

Belongs to the CoaE family.

The protein localises to the cytoplasm. The catalysed reaction is 3'-dephospho-CoA + ATP = ADP + CoA + H(+). Its pathway is cofactor biosynthesis; coenzyme A biosynthesis; CoA from (R)-pantothenate: step 5/5. Its function is as follows. Catalyzes the phosphorylation of the 3'-hydroxyl group of dephosphocoenzyme A to form coenzyme A. The chain is Dephospho-CoA kinase from Geobacter sulfurreducens (strain ATCC 51573 / DSM 12127 / PCA).